We begin with the raw amino-acid sequence, 856 residues long: Cyclic di-GMP phosphodiesterase PdeB (856 aa).

A run of 2 helical transmembrane segments spans residues 7 to 27 and 230 to 250; these read ILVFIVGFCLPAVVLVSYCLG and WVSLAVILLGILIVALGYVWL. One can recognise a PAS domain in the interval 303–350; that stretch reads QKERGKITLESIAEAVILTDIEAKVIYMNPKAETLLEVASSNAVGESL. Residues 454-587 enclose the GGDEF domain; that stretch reads RSLAVCYLDL…GTNQIHIYDD (134 aa). Residues 598-852 form the EAL domain; sequence APKWAVRIAQ…SYCEQFETRL (255 aa).

It localises to the cell membrane. It carries out the reaction 3',3'-c-di-GMP + H2O = 5'-phosphoguanylyl(3'-&gt;5')guanosine + H(+). Affects motility and biofilm formation, and is linked to the regulation of sulfate uptake and assimilation. The protein is Cyclic di-GMP phosphodiesterase PdeB (pdeB) of Shewanella oneidensis (strain ATCC 700550 / JCM 31522 / CIP 106686 / LMG 19005 / NCIMB 14063 / MR-1).